Consider the following 263-residue polypeptide: Tryptophan synthase alpha chain (263 aa).

Catalysis depends on proton acceptor residues Glu49 and Asp60.

Belongs to the TrpA family. Tetramer of two alpha and two beta chains.

It catalyses the reaction (1S,2R)-1-C-(indol-3-yl)glycerol 3-phosphate + L-serine = D-glyceraldehyde 3-phosphate + L-tryptophan + H2O. It participates in amino-acid biosynthesis; L-tryptophan biosynthesis; L-tryptophan from chorismate: step 5/5. The alpha subunit is responsible for the aldol cleavage of indoleglycerol phosphate to indole and glyceraldehyde 3-phosphate. The polypeptide is Tryptophan synthase alpha chain (Cereibacter sphaeroides (strain KD131 / KCTC 12085) (Rhodobacter sphaeroides)).